We begin with the raw amino-acid sequence, 734 residues long: Photosystem I P700 chlorophyll a apoprotein A2 (734 aa).

Helical transmembrane passes span Ile-46–Ala-69, Leu-135–Gln-158, Leu-175–Ile-199, Ile-273–Tyr-291, Leu-330–Tyr-353, Ala-369–Val-395, Ala-417–His-439, and Phe-517–Val-535. Residues Cys-559 and Cys-568 each coordinate [4Fe-4S] cluster. 2 consecutive transmembrane segments (helical) span residues Ala-575 to Trp-596 and Leu-643 to Ile-665. Chlorophyll a-binding residues include His-654, Met-662, and Tyr-670. A phylloquinone-binding site is contributed by Trp-671. A helical membrane pass occupies residues Leu-707–Ala-727.

This sequence belongs to the PsaA/PsaB family. In terms of assembly, the PsaA/B heterodimer binds the P700 chlorophyll special pair and subsequent electron acceptors. PSI consists of a core antenna complex that captures photons, and an electron transfer chain that converts photonic excitation into a charge separation. The eukaryotic PSI reaction center is composed of at least 11 subunits. P700 is a chlorophyll a/chlorophyll a' dimer, A0 is one or more chlorophyll a, A1 is one or both phylloquinones and FX is a shared 4Fe-4S iron-sulfur center. serves as cofactor.

The protein localises to the plastid. It is found in the chloroplast thylakoid membrane. The enzyme catalyses reduced [plastocyanin] + hnu + oxidized [2Fe-2S]-[ferredoxin] = oxidized [plastocyanin] + reduced [2Fe-2S]-[ferredoxin]. PsaA and PsaB bind P700, the primary electron donor of photosystem I (PSI), as well as the electron acceptors A0, A1 and FX. PSI is a plastocyanin/cytochrome c6-ferredoxin oxidoreductase, converting photonic excitation into a charge separation, which transfers an electron from the donor P700 chlorophyll pair to the spectroscopically characterized acceptors A0, A1, FX, FA and FB in turn. Oxidized P700 is reduced on the lumenal side of the thylakoid membrane by plastocyanin or cytochrome c6. This chain is Photosystem I P700 chlorophyll a apoprotein A2, found in Guillardia theta (Cryptophyte).